The primary structure comprises 199 residues: NAD(P)H dehydrogenase (quinone) (199 aa).

In terms of domain architecture, Flavodoxin-like spans 4 to 190; the sequence is VLVLYYSTYG…EGARHQGELI (187 aa). FMN-binding positions include 10-15 and 78-80; these read STYGHV and TRF. NAD(+) is bound at residue tyrosine 12. A substrate-binding site is contributed by tryptophan 98. Residues 113-119 and histidine 134 contribute to the FMN site; that span reads STATQHG.

It belongs to the WrbA family. It depends on FMN as a cofactor.

The enzyme catalyses a quinone + NADH + H(+) = a quinol + NAD(+). The catalysed reaction is a quinone + NADPH + H(+) = a quinol + NADP(+). The chain is NAD(P)H dehydrogenase (quinone) from Cupriavidus metallidurans (strain ATCC 43123 / DSM 2839 / NBRC 102507 / CH34) (Ralstonia metallidurans).